The primary structure comprises 806 residues: Ribonucleoside-diphosphate reductase large subunit (806 aa).

Residues M1–D91 enclose the ATP-cone domain. ATP contacts are provided by residues N5 to R6, E11 to Q17, T52, and D56. S215 is a binding site for GDP. Residues C216 and C442 are joined by a disulfide bond. DTTP-binding positions include D224–I226, K241, R254, and R261–G262. Residue N425 coordinates GDP. N425 (proton acceptor) is an active-site residue. C427 serves as the catalytic Cysteine radical intermediate. Residues E429 and T604–T607 contribute to the GDP site. E429 acts as the Proton acceptor in catalysis.

It belongs to the ribonucleoside diphosphate reductase large chain family. In terms of assembly, heterodimer of a large and a small subunit.

The catalysed reaction is a 2'-deoxyribonucleoside 5'-diphosphate + [thioredoxin]-disulfide + H2O = a ribonucleoside 5'-diphosphate + [thioredoxin]-dithiol. Its activity is regulated as follows. Under complex allosteric control mediated by deoxynucleoside triphosphates and ATP binding to separate specificity and activation sites on the large subunit. The type of nucleotide bound at the specificity site determines substrate preference. It seems probable that ATP makes the enzyme reduce CDP and UDP, dGTP favors ADP reduction and dTTP favors GDP reduction. Stimulated by ATP and inhibited by dATP binding to the activity site. Its function is as follows. Provides the precursors necessary for DNA synthesis. Catalyzes the biosynthesis of deoxyribonucleotides from the corresponding ribonucleotides. This Plasmodium falciparum (isolate Dd2) protein is Ribonucleoside-diphosphate reductase large subunit (RNR1).